Consider the following 190-residue polypeptide: CASP-like protein 1E2 (190 aa).

Residues 1 to 12 (MENEGKNNMNGM) are compositionally biased toward low complexity. The disordered stretch occupies residues 1-24 (MENEGKNNMNGMEMEKGKRESRSR). Topologically, residues 1 to 28 (MENEGKNNMNGMEMEKGKRESRSRKGVE) are cytoplasmic. Basic and acidic residues predominate over residues 13–24 (EMEKGKRESRSR). Residues 29-49 (LTMRVLALVLTMAAATVLGVA) form a helical membrane-spanning segment. The Extracellular portion of the chain corresponds to 50 to 83 (KQTKVVSIKLIPALPPLDITTTAKASYLSAFVYN). The helical transmembrane segment at 84 to 104 (ISANAIACGYTAISIAILMIS) threads the bilayer. Topologically, residues 105–111 (RGRRSKK) are cytoplasmic. A helical transmembrane segment spans residues 112–132 (LLMAVLLGDLVMVALLFSGTG). At 133–163 (AASAIGLMGLQGNKHVMWNKVCGVFGKFCHR) the chain is on the extracellular side. The chain crosses the membrane as a helical span at residues 164-184 (AAPSLPLTFLAAVVFMFLVVL). At 185–190 (DAIKLP) the chain is on the cytoplasmic side.

This sequence belongs to the Casparian strip membrane proteins (CASP) family. As to quaternary structure, homodimer and heterodimers.

The protein resides in the cell membrane. The chain is CASP-like protein 1E2 from Arabidopsis lyrata subsp. lyrata (Lyre-leaved rock-cress).